A 759-amino-acid polypeptide reads, in one-letter code: Putative ATP-dependent DNA helicase YjcD (759 aa).

A disordered region spans residues 68–121 (ACEPKPSKEGKKEDDQESGVIRLPKGKAIAADPSPAVTEWHRPRSIKPGTPFVP). The segment covering 69–81 (CEPKPSKEGKKED) has biased composition (basic and acidic residues). The 280-residue stretch at 134–413 (VGLNTDQLKA…IYLTANYRST (280 aa)) folds into the UvrD-like helicase ATP-binding domain. ATP is bound by residues 158–163 (GSGKTR) and R411. Residues 414–676 (HPIVSSADIV…QLMTIHRSKG (263 aa)) form the UvrD-like helicase C-terminal domain.

This sequence belongs to the helicase family. UvrD subfamily.

It localises to the cytoplasm. It carries out the reaction Couples ATP hydrolysis with the unwinding of duplex DNA by translocating in the 3'-5' direction.. The enzyme catalyses ATP + H2O = ADP + phosphate + H(+). Functionally, may be involved in the generation of recombinogenic substrates for the subsequent action of RecA. This chain is Putative ATP-dependent DNA helicase YjcD (yjcD), found in Bacillus subtilis (strain 168).